We begin with the raw amino-acid sequence, 245 residues long: 3-deoxy-manno-octulosonate cytidylyltransferase (245 aa).

The protein belongs to the KdsB family.

Its subcellular location is the cytoplasm. It catalyses the reaction 3-deoxy-alpha-D-manno-oct-2-ulosonate + CTP = CMP-3-deoxy-beta-D-manno-octulosonate + diphosphate. Its pathway is nucleotide-sugar biosynthesis; CMP-3-deoxy-D-manno-octulosonate biosynthesis; CMP-3-deoxy-D-manno-octulosonate from 3-deoxy-D-manno-octulosonate and CTP: step 1/1. It functions in the pathway bacterial outer membrane biogenesis; lipopolysaccharide biosynthesis. Activates KDO (a required 8-carbon sugar) for incorporation into bacterial lipopolysaccharide in Gram-negative bacteria. The sequence is that of 3-deoxy-manno-octulosonate cytidylyltransferase from Rhodopseudomonas palustris (strain HaA2).